A 369-amino-acid polypeptide reads, in one-letter code: Phosphoribosylformylglycinamidine cyclo-ligase (369 aa).

The interval 1-22 is disordered; the sequence is MSKRDTSQPKTGQPKTSKRRNG.

This sequence belongs to the AIR synthase family.

The protein localises to the cytoplasm. It carries out the reaction 2-formamido-N(1)-(5-O-phospho-beta-D-ribosyl)acetamidine + ATP = 5-amino-1-(5-phospho-beta-D-ribosyl)imidazole + ADP + phosphate + H(+). The protein operates within purine metabolism; IMP biosynthesis via de novo pathway; 5-amino-1-(5-phospho-D-ribosyl)imidazole from N(2)-formyl-N(1)-(5-phospho-D-ribosyl)glycinamide: step 2/2. The protein is Phosphoribosylformylglycinamidine cyclo-ligase of Mesorhizobium japonicum (strain LMG 29417 / CECT 9101 / MAFF 303099) (Mesorhizobium loti (strain MAFF 303099)).